The primary structure comprises 705 residues: GATOR2 complex protein WDR24 (705 aa).

6 WD repeats span residues 1-28, 34-74, 77-117, 121-161, 165-207, and 211-254; these read MDEN…RNKQ, EHKR…SVST, GQSE…RYER, AHNG…AKEI, QTIA…IPSA, and EHKD…IDRA. Residues 633-655 form a C4-type zinc finger; sequence NCSNCKRPMSNRGWICDRCRQCA. Residues cysteine 634, cysteine 637, cysteine 648, cysteine 651, cysteine 658, cysteine 661, cysteine 672, cysteine 675, histidine 677, histidine 680, histidine 683, cysteine 694, cysteine 698, histidine 700, and cysteine 702 each contribute to the Zn(2+) site. The segment at 656–705 adopts an RING-type; atypical zinc-finger fold; it reads SMCAVCHHVVKGLFVWCQGCSHGGHLQHIMKWLETSSHCPAGCGHLCEYT.

Belongs to the WD repeat WDR24 family. Component of the GATOR2 subcomplex, composed of MIOS, SEC13, SEH1L, WDR24 and WDR59. The GATOR2 complex interacts with CASTOR1 and CASTOR2; the interaction is negatively regulated by arginine. The GATOR2 complex interacts with SESN1, SESN2 and SESN3; the interaction is negatively regulated by amino acids.

The protein localises to the lysosome membrane. It catalyses the reaction S-ubiquitinyl-[E2 ubiquitin-conjugating enzyme]-L-cysteine + [acceptor protein]-L-lysine = [E2 ubiquitin-conjugating enzyme]-L-cysteine + N(6)-ubiquitinyl-[acceptor protein]-L-lysine.. Its pathway is protein modification; protein ubiquitination. The GATOR2 complex is negatively regulated by the upstream amino acid sensors CASTOR1 and SESN2, which sequester the GATOR2 complex in absence of amino acids. In the presence of abundant amino acids, GATOR2 is released from CASTOR1 and SESN2 and activated. In terms of biological role, catalytic component of the GATOR2 complex, a multiprotein complex that acts as an activator of the amino acid-sensing branch of the mTORC1 signaling pathway. The GATOR2 complex indirectly activates mTORC1 through the inhibition of the GATOR1 subcomplex. GATOR2 probably acts as an E3 ubiquitin-protein ligase toward GATOR1. In the presence of abundant amino acids, the GATOR2 complex mediates ubiquitination of the NPRL2 core component of the GATOR1 complex, leading to GATOR1 inactivation. In the absence of amino acids, GATOR2 is inhibited, activating the GATOR1 complex. In addition to its role in regulation of the mTORC1 complex, promotes the acidification of lysosomes and facilitates autophagic flux. Within the GATOR2 complex, WDR24 constitutes the catalytic subunit that mediates 'Lys-6'-linked ubiquitination of NPRL2. This Gallus gallus (Chicken) protein is GATOR2 complex protein WDR24.